We begin with the raw amino-acid sequence, 299 residues long: Neomycin C epimerase (299 aa).

In terms of domain architecture, Radical SAM core spans 10 to 222 (PVRQVRAYRN…WNHIFETGRR (213 aa)). [4Fe-4S] cluster-binding residues include C26, C30, C33, C226, and C247. C249 serves as the catalytic Proton donor. Positions 271 and 274 each coordinate [4Fe-4S] cluster.

This sequence belongs to the radical SAM superfamily. It depends on [4Fe-4S] cluster as a cofactor.

It carries out the reaction neomycin C + AH2 + S-adenosyl-L-methionine = neomycin B + 5'-deoxyadenosine + L-methionine + A + H(+). It functions in the pathway antibiotic biosynthesis; neomycin biosynthesis. Functionally, catalyzes the last step of neomycin B biosynthesis, i.e. the irreversible epimerization at C-5''' of neomycin C to give neomycin B. To a lesser extent, is also able to convert neomycin Y2 to neomycin Y1. This chain is Neomycin C epimerase, found in Streptomyces fradiae (Streptomyces roseoflavus).